Consider the following 338-residue polypeptide: Oligopeptide transport ATP-binding protein OppD (338 aa).

Positions 7 to 257 (LEAKQVSVAF…PKHPYTRSLL (251 aa)) constitute an ABC transporter domain. 43-50 (GESGSGKS) is an ATP binding site.

Belongs to the ABC transporter superfamily. The complex is composed of two ATP-binding proteins (OppD and OppF), two transmembrane proteins (OppB and OppC) and a solute-binding protein (OppA).

It localises to the cell membrane. The catalysed reaction is a [peptide](out) + ATP + H2O = a [peptide](in) + ADP + phosphate + H(+). Its function is as follows. Part of the ABC transporter complex OppABCDF involved in the uptake of oligopeptides. Probably responsible for energy coupling to the transport system. Essential for uptake of peptides larger than three amino acids and for growth in milk. This chain is Oligopeptide transport ATP-binding protein OppD, found in Lactococcus lactis subsp. cremoris (strain SK11).